The following is a 388-amino-acid chain: Beta-1,4-galactosyltransferase 5 (388 aa).

At 1–14 (MRARRGLLRLPRRS) the chain is on the cytoplasmic side. A helical; Signal-anchor for type II membrane protein transmembrane segment spans residues 15-35 (LLAALFFFSLSSSLLYFVYVA). At 36 to 388 (PGIVNTYLFM…TPELAQVNEY (353 aa)) the chain is on the lumenal side. Residues asparagine 77, asparagine 81, asparagine 90, asparagine 111, and asparagine 128 are each glycosylated (N-linked (GlcNAc...) asparagine). A disulfide bridge links cysteine 114 with cysteine 158. UDP-alpha-D-galactose is bound by residues 169–173 (PFRNR), 208–210 (FNR), 235–236 (VD), tyrosine 264, and tryptophan 296. Cysteine 229 and cysteine 248 are oxidised to a cystine. Aspartate 236 serves as a coordination point for Mn(2+). N-acetyl-D-glucosamine is bound at residue 298-301 (GEDD). Histidine 329 contacts Mn(2+). Position 329–330 (329–330 (HH)) interacts with UDP-alpha-D-galactose. Arginine 340 contributes to the N-acetyl-D-glucosamine binding site. 2 N-linked (GlcNAc...) asparagine glycosylation sites follow: asparagine 364 and asparagine 373.

It belongs to the glycosyltransferase 7 family. The cofactor is Mn(2+). In terms of tissue distribution, ubiquitously expressed.

Its subcellular location is the golgi apparatus. The protein resides in the golgi stack membrane. It catalyses the reaction a beta-D-glucosyl-(1&lt;-&gt;1')-N-acylsphing-4-enine + UDP-alpha-D-galactose = a beta-D-Gal-(1-&gt;4)-beta-D-Glc-(1&lt;-&gt;1)-Cer(d18:1(4E)) + UDP + H(+). The protein operates within protein modification; protein glycosylation. Its pathway is sphingolipid metabolism. In terms of biological role, catalyzes the synthesis of lactosylceramide (LacCer) via the transfer of galactose from UDP-galactose to glucosylceramide (GlcCer). LacCer is the starting point in the biosynthesis of all gangliosides (membrane-bound glycosphingolipids) which play pivotal roles in the CNS including neuronal maturation and axonal and myelin formation. Plays a role in the glycosylation of BMPR1A and regulation of its protein stability. Essential for extraembryonic development during early embryogenesis. This Homo sapiens (Human) protein is Beta-1,4-galactosyltransferase 5.